A 352-amino-acid chain; its full sequence is C-C chemokine receptor type 5 (352 aa).

Residues 1 to 30 lie on the Extracellular side of the membrane; sequence MDYQVSSPTYDIDYYTSEPCQKVNVKQIAA. Tyr3 carries the sulfotyrosine modification. Ser6 and Ser7 each carry an O-linked (GalNAc...) serine glycan. Residues Tyr10, Tyr14, and Tyr15 each carry the sulfotyrosine modification. Intrachain disulfides connect Cys20–Cys269 and Cys101–Cys178. The chain crosses the membrane as a helical span at residues 31–58; that stretch reads RLLPPLYSLVFIFGFVGNILVVLILINC. Over 59–68 the chain is Cytoplasmic; it reads KRLKSMTDIY. The helical transmembrane segment at 69–89 threads the bilayer; it reads LLNLAISDLFFLLTVPFWAHY. The Extracellular segment spans residues 90–102; the sequence is AAAQWDFGNTMCQ. The chain crosses the membrane as a helical span at residues 103–124; that stretch reads LLTGLYFIGFFSGIFFIILLTI. Residues 125 to 141 lie on the Cytoplasmic side of the membrane; sequence DRYLAIVHAVFALKART. The helical transmembrane segment at 142–166 threads the bilayer; it reads VTFGVVTSVITWVVAVFASLPGIIF. Residues 167–198 are Extracellular-facing; the sequence is TRSQREGLHYTCSSHFPYSQYQFWKNFQTLKI. The chain crosses the membrane as a helical span at residues 199–218; it reads VILGLVLPLLVMVICYSGIL. At 219 to 235 the chain is on the cytoplasmic side; that stretch reads KTLLRCRNEKKRHRAVR. The chain crosses the membrane as a helical span at residues 236-260; that stretch reads LIFTIMIVYFLFWAPYNIVLLLNTF. Residues 261–277 lie on the Extracellular side of the membrane; the sequence is QEFFGLNNCSSSNRLDQ. A helical transmembrane segment spans residues 278–301; that stretch reads AMQVTETLGMTHCCINPIIYAFVG. Residues 302–352 lie on the Cytoplasmic side of the membrane; that stretch reads EKFRNYLLVFFQKHIAKRFCKCCYIFQQEAPERASSVYTRSTGEQEISVGL. 3 S-palmitoyl cysteine lipidation sites follow: Cys321, Cys323, and Cys324. A phosphoserine; by BARK1 mark is found at Ser336, Ser337, Ser342, and Ser349.

The protein belongs to the G-protein coupled receptor 1 family. In terms of assembly, interacts with PRAF2. Efficient ligand binding to CCL3/MIP-1alpha and CCL4/MIP-1beta requires sulfation, O-glycosylation and sialic acid modifications. Glycosylation on Ser-6 is required for efficient binding of CCL4. Interacts with GRK2. Interacts with ARRB1 and ARRB2. Interacts with CNIH4. Interacts with S100A4; this interaction stimulates T-lymphocyte chemotaxis. In terms of processing, sulfated on at least 2 of the N-terminal tyrosines. Sulfation is required for efficient binding of the chemokines, CCL3 and CCL4. Post-translationally, palmitoylation in the C-terminal is important for cell surface expression. Phosphorylation on serine residues in the C-terminal is stimulated by binding CC chemokines especially by APO-RANTES. In terms of processing, O-glycosylated, but not N-glycosylated. Ser-6 appears to be the major site even if Ser-7 may be also O-glycosylated. Also sialylated glycans present which contribute to chemokine binding. Thr-16 and Ser-17 may also be glycosylated and, if so, with small moieties such as a T-antigen.

Its subcellular location is the cell membrane. In terms of biological role, receptor for a number of inflammatory CC-chemokines including CCL3/MIP-1-alpha, CCL4/MIP-1-beta and RANTES and subsequently transduces a signal by increasing the intracellular calcium ion level. May play a role in the control of granulocytic lineage proliferation or differentiation. Participates in T-lymphocyte migration to the infection site by acting as a chemotactic receptor. This chain is C-C chemokine receptor type 5 (CCR5), found in Rhinopithecus bieti (Black snub-nosed monkey).